Reading from the N-terminus, the 323-residue chain is Elongation factor P--(R)-beta-lysine ligase (323 aa).

74-76 is a binding site for substrate; sequence SPE. ATP-binding positions include 98–100 and Asn-107; that span reads RNE. Substrate is bound at residue Tyr-116. ATP is bound at residue 242–243; the sequence is EL. Glu-249 contacts substrate. Gly-298 contributes to the ATP binding site.

The protein belongs to the class-II aminoacyl-tRNA synthetase family. EpmA subfamily. As to quaternary structure, homodimer.

It carries out the reaction D-beta-lysine + L-lysyl-[protein] + ATP = N(6)-((3R)-3,6-diaminohexanoyl)-L-lysyl-[protein] + AMP + diphosphate + H(+). In terms of biological role, with EpmB is involved in the beta-lysylation step of the post-translational modification of translation elongation factor P (EF-P). Catalyzes the ATP-dependent activation of (R)-beta-lysine produced by EpmB, forming a lysyl-adenylate, from which the beta-lysyl moiety is then transferred to the epsilon-amino group of a conserved specific lysine residue in EF-P. The chain is Elongation factor P--(R)-beta-lysine ligase from Photobacterium profundum (strain SS9).